A 938-amino-acid polypeptide reads, in one-letter code: Nitrate reductase (938 aa).

The 64-residue stretch at 1-64 folds into the 4Fe-4S Mo/W bis-MGD-type domain; sequence MSVVQSSCAY…RLLDSLAQPN (64 aa). [4Fe-4S] cluster is bound by residues Cys8, Cys11, Cys15, and Cys50.

Belongs to the prokaryotic molybdopterin-containing oxidoreductase family. NasA/NapA/NarB subfamily. The cofactor is [4Fe-4S] cluster. Mo-bis(molybdopterin guanine dinucleotide) is required as a cofactor.

Its subcellular location is the cytoplasm. The enzyme catalyses nitrate + a quinol = a quinone + nitrite + H2O. It functions in the pathway nitrogen metabolism; nitrate reduction (assimilation). Nitrate reductase is a key enzyme involved in the first step of nitrate assimilation in plants, fungi and bacteria. This Shewanella frigidimarina (strain NCIMB 400) protein is Nitrate reductase.